A 443-amino-acid polypeptide reads, in one-letter code: Xaa-Pro dipeptidase (443 aa).

Positions 244, 255, 339, 384, and 423 each coordinate Mn(2+).

The protein belongs to the peptidase M24B family. Bacterial-type prolidase subfamily. Mn(2+) serves as cofactor.

The catalysed reaction is Xaa-L-Pro dipeptide + H2O = an L-alpha-amino acid + L-proline. Splits dipeptides with a prolyl residue in the C-terminal position. This Pseudoalteromonas atlantica (strain T6c / ATCC BAA-1087) protein is Xaa-Pro dipeptidase.